The following is a 562-amino-acid chain: SPI-1 type 3 secretion system secretin (562 aa).

An N-terminal signal peptide occupies residues 1 to 24 (MKTHILLARVLACAALVLVTPGYS).

The protein belongs to the bacterial secretin family. T3SS SctC subfamily. In terms of assembly, the core secretion machinery of the T3SS is composed of approximately 20 different proteins, including cytoplasmic components, a base, an export apparatus and a needle. This subunit is part of the base, which anchors the injectisome in the bacterial cell envelope. Forms a stable homooligomeric complex. The complex is composed of 15 subunits.

The protein resides in the cell outer membrane. Its function is as follows. Component of the type III secretion system (T3SS), also called injectisome, which is used to inject bacterial effector proteins into eukaryotic host cells. Forms a ring-shaped multimeric structure with an apparent central pore in the outer membrane. The protein is SPI-1 type 3 secretion system secretin of Salmonella typhimurium (strain LT2 / SGSC1412 / ATCC 700720).